Consider the following 239-residue polypeptide: Lysophospholipase-like protein 1 (239 aa).

N-acetylalanine is present on alanine 2. Active-site charge relay system residues include serine 125, aspartate 180, and histidine 212.

The protein belongs to the AB hydrolase superfamily. AB hydrolase 2 family.

The protein localises to the cytoplasm. Its subcellular location is the cytosol. It carries out the reaction S-hexadecanoyl-L-cysteinyl-[protein] + H2O = L-cysteinyl-[protein] + hexadecanoate + H(+). Functionally, palmitoyl thioesterase that catalyzes depalmitoylation of CGAS and KCNMA1. Acts as a regulator of innate immunity by mediating depalmitoylation of CGAS, thereby preventing CGAS homodimerization and cyclic GMP-AMP synthase activity. Does not exhibit phospholipase nor triacylglycerol lipase activity, able to hydrolyze only short chain substrates due to its shallow active site. This chain is Lysophospholipase-like protein 1, found in Mus musculus (Mouse).